The sequence spans 185 residues: Ribosome-recycling factor (185 aa).

The protein belongs to the RRF family.

The protein resides in the cytoplasm. In terms of biological role, responsible for the release of ribosomes from messenger RNA at the termination of protein biosynthesis. May increase the efficiency of translation by recycling ribosomes from one round of translation to another. The sequence is that of Ribosome-recycling factor from Corynebacterium urealyticum (strain ATCC 43042 / DSM 7109).